The following is a 752-amino-acid chain: Exocyst complex component EXO84B (752 aa).

2 disordered regions span residues 511 to 532 (QTGQ…NPEQ) and 724 to 752 (TKGN…HGSY). Over residues 515 to 532 (RTDDLRRPLDRQNRNPEQ) the composition is skewed to basic and acidic residues. Positions 733-752 (SPTASVSAQSVSSARSHGSY) are enriched in low complexity.

The protein belongs to the EXO84 family. In terms of assembly, the exocyst complex is composed of SEC3, SEC5, SEC6, SEC8, SEC10, EXO70A1 and EXO84B. Interacts with SEC6, SEC10, SEC15B and EXO70A1. Interacts with EXO70B1. Binds directly to B1L.

Its subcellular location is the cytoplasm. It localises to the cytosol. It is found in the perinuclear region. The protein localises to the cytoskeleton. The protein resides in the phragmoplast. Its subcellular location is the secreted. It localises to the cell wall. It is found in the cell membrane. In terms of biological role, component of the exocyst complex involved in the docking of exocytic vesicles with fusion sites on the plasma membrane during regulated or polarized secretion. Involved in polarized cell growth and organ morphogenesis. During cytokinesis, involved in cell plate initiation, cell plate maturation and formation of new primary cell wall. Probable component of an exocyst subcomplex specifically involved in autophagy-related, Golgi-independent membrane traffic to the vacuole. Regulates autophagosome formation and autophagy-related Golgi-independent import into the vacuole. Mediates ABCG36/PEN3 outer-membrane polarity at the periphery of lateral root cap and root epidermal cells. This chain is Exocyst complex component EXO84B, found in Arabidopsis thaliana (Mouse-ear cress).